A 764-amino-acid chain; its full sequence is Nucleolar transcription factor 1 (764 aa).

Position 1 is an N-acetylmethionine (Met-1). The tract at residues 1 to 21 (MNGEADCPTDLEMAAPKGQDR) is disordered. 2 consecutive DNA-binding regions (HMG box) follow at residues 112 to 180 (PKKP…ARFR) and 196 to 264 (PEKP…RDYI). The residue at position 201 (Thr-201) is a Phosphothreonine. A phosphoserine mark is found at Ser-273, Ser-336, Ser-364, Ser-389, Ser-412, Ser-433, Ser-435, Ser-484, Ser-495, Ser-546, Ser-584, and Ser-638. Residues 298–362 (TKPPPNSYSL…DYEVELLRFL (65 aa)) constitute a DNA-binding region (HMG box 3). Residues 381 to 411 (NINKKQATSPASKKPAQEGGKGGSEKPKRPV) are disordered. 3 DNA-binding regions (HMG box) span residues 407 to 475 (PKRP…GGER), 482 to 549 (PESP…SEMR), and 568 to 634 (KKPP…DLWV). The interval 459-487 (REAALKAQSERKPGGEREERGKLPESPKR) is disordered. Residues 546–576 (SEMRAPPAATNSSKKMKFQGEPKKPPMNGYQ) are disordered. The segment at 648–764 (YISNKRKSMT…SGDSSDSDSN (117 aa)) is disordered. Polar residues predominate over residues 664–674 (PKSSRTTLQSK). Residues 677–745 (SEEDDEEDED…DDDEDEDNES (69 aa)) show a composition bias toward acidic residues. The segment covering 746–758 (EGSSSSSSSSGDS) has biased composition (low complexity).

As to quaternary structure, homodimer. Part of Pol I pre-initiation complex (PIC), in which Pol I core assembles with RRN3 and promoter-bound UTBF and SL1/TIF-IB complex. Interacts with TOP2A in the context of Pol I complex. Interacts with TBP. Interacts with TAF1A. Interacts with RASL11A. Binds to IRS1 and PIK3CA. Interacts with DHX33. Interacts with PHF6. Interacts with CEBPA (isoform 1 and isoform 4). Interacts with DDX11. Interacts with NOP53. Interacts with ALKBH2. In terms of processing, phosphorylated and activated by PIK3CA.

The protein localises to the nucleus. It localises to the nucleolus. Its function is as follows. Recognizes the ribosomal RNA gene promoter and activates transcription mediated by RNA polymerase I (Pol I) through cooperative interactions with the transcription factor SL1/TIF-IB complex. It binds specifically to the upstream control element and can activate Pol I promoter escape. The polypeptide is Nucleolar transcription factor 1 (UBTF) (Homo sapiens (Human)).